A 334-amino-acid polypeptide reads, in one-letter code: Cytoskeleton protein RodZ (334 aa).

The Cytoplasmic portion of the chain corresponds to 1 to 111; that stretch reads MNTEATHDQN…LGKRRKKRDG (111 aa). The HTH cro/C1-type domain occupies 19 to 71; that stretch reads LRNAREQLGLSQQAVAERLCLKVSTVRDIEEDKAPSDLASTFLRGYIRSYARL. The segment at residues 30–49 is a DNA-binding region (H-T-H motif); sequence QQAVAERLCLKVSTVRDIEE. Residues 112–132 form a helical; Signal-anchor for type II membrane protein membrane-spanning segment; the sequence is WLMSFTWLVLFVVVGLTGAWW. The Periplasmic portion of the chain corresponds to 133–334; it reads WQNHKAQQEE…TLNAEPTPAQ (202 aa). The interval 155–241 is disordered; sequence NADKDSGQSV…PSALPTSQAG (87 aa). Composition is skewed to low complexity over residues 170–211 and 219–241; these read AATS…TVVA and TAATSAAPAATETPSALPTSQAG.

This sequence belongs to the RodZ family.

Its subcellular location is the cell inner membrane. Its function is as follows. Cytoskeletal protein that is involved in cell-shape control through regulation of the length of the long axis. This Salmonella agona (strain SL483) protein is Cytoskeleton protein RodZ.